The chain runs to 429 residues: Glucose-1-phosphate adenylyltransferase (429 aa).

Residues Gly-162, 177-178 (EK), and Ser-209 contribute to the alpha-D-glucose 1-phosphate site.

Belongs to the bacterial/plant glucose-1-phosphate adenylyltransferase family. Homotetramer.

It carries out the reaction alpha-D-glucose 1-phosphate + ATP + H(+) = ADP-alpha-D-glucose + diphosphate. It functions in the pathway glycan biosynthesis; glycogen biosynthesis. Functionally, involved in the biosynthesis of ADP-glucose, a building block required for the elongation reactions to produce glycogen. Catalyzes the reaction between ATP and alpha-D-glucose 1-phosphate (G1P) to produce pyrophosphate and ADP-Glc. The chain is Glucose-1-phosphate adenylyltransferase from Trichormus variabilis (strain ATCC 29413 / PCC 7937) (Anabaena variabilis).